The primary structure comprises 424 residues: Glutamate-1-semialdehyde 2,1-aminomutase (424 aa).

K263 carries the post-translational modification N6-(pyridoxal phosphate)lysine.

Belongs to the class-III pyridoxal-phosphate-dependent aminotransferase family. HemL subfamily. Homodimer. Requires pyridoxal 5'-phosphate as cofactor.

The protein localises to the cytoplasm. The catalysed reaction is (S)-4-amino-5-oxopentanoate = 5-aminolevulinate. The protein operates within porphyrin-containing compound metabolism; protoporphyrin-IX biosynthesis; 5-aminolevulinate from L-glutamyl-tRNA(Glu): step 2/2. This chain is Glutamate-1-semialdehyde 2,1-aminomutase, found in Campylobacter jejuni subsp. jejuni serotype O:2 (strain ATCC 700819 / NCTC 11168).